We begin with the raw amino-acid sequence, 330 residues long: Ferredoxin--NADP reductase (330 aa).

E35, Q43, Y48, V90, F123, D285, and T326 together coordinate FAD.

It belongs to the ferredoxin--NADP reductase type 2 family. In terms of assembly, homodimer. FAD serves as cofactor.

It carries out the reaction 2 reduced [2Fe-2S]-[ferredoxin] + NADP(+) + H(+) = 2 oxidized [2Fe-2S]-[ferredoxin] + NADPH. This Streptococcus pyogenes serotype M6 (strain ATCC BAA-946 / MGAS10394) protein is Ferredoxin--NADP reductase.